A 323-amino-acid polypeptide reads, in one-letter code: Global nitrogen regulator NrpRI (323 aa).

The segment at 11 to 76 (IEIMRVIHES…TLTDLGENEM (66 aa)) is winged helix-turn-helix. Residues 86 to 323 (GFVISRIEEM…MLDYQTMKEI (238 aa)) are NRD.

Belongs to the NrpR family. In terms of assembly, forms a complex with NrpRII and the general archaeal transcription factors TBP and TFB. Interacts directly with NrpRII.

Its activity is regulated as follows. Under nitrogen limitation, binding of 2-oxoglutarate to the NrpRI/NrpRII complex decreases the binding affinity of NrpRI to DNA as well as the binding affinity of NrpRII to TBP and TFB, which leads to removal of the complex from the operator, RNA polymerase recruitment and initiation of transcription. In terms of biological role, plays a major role in nitrogen regulation. Under nitrogen sufficiency, binds to the nifH and the glnk1 promoters, leading to repression of the transcription of the genes. The sequence is that of Global nitrogen regulator NrpRI from Methanosarcina mazei (strain ATCC BAA-159 / DSM 3647 / Goe1 / Go1 / JCM 11833 / OCM 88) (Methanosarcina frisia).